The sequence spans 144 residues: Conopressin-conophysin (144 aa).

Positions 1-27 are cleaved as a signal peptide; the sequence is MTRSALQMGRLTLVLCLLLQLVLVTQA. Residues C28 and C33 are joined by a disulfide bond. Position 36 is an aspartic acid 1-amide (D36). The propeptide occupies 37–44; that stretch reads GERDVDGR. Cystine bridges form between C50–C90, C53–C64, C58–C80, C65–C70, C97–C117, C109–C129, and C118–C123. Residues 131–144 constitute a propeptide that is removed on maturation; sequence KESKSGIRVGCQRS.

It belongs to the vasopressin/oxytocin family. In terms of tissue distribution, expressed by the venom duct.

The protein resides in the secreted. The protein is Conopressin-conophysin of Conus bayani (Bayan's cone).